A 138-amino-acid polypeptide reads, in one-letter code: Large ribosomal subunit protein uL16 (138 aa).

This sequence belongs to the universal ribosomal protein uL16 family. In terms of assembly, part of the 50S ribosomal subunit.

Its function is as follows. Binds 23S rRNA and is also seen to make contacts with the A and possibly P site tRNAs. This chain is Large ribosomal subunit protein uL16, found in Rhodospirillum rubrum (strain ATCC 11170 / ATH 1.1.1 / DSM 467 / LMG 4362 / NCIMB 8255 / S1).